The sequence spans 123 residues: Anti-lipopolysaccharide factor (123 aa).

The signal sequence occupies residues 1 to 26 (MRKGVVAGLCLALVVMCLYLPQPCEA). Residue Asn45 is glycosylated (N-linked (GlcNAc...) asparagine). Cys55 and Cys76 are disulfide-bonded.

Isoform 1 is highly expressed in muscle and stomach, moderately in heart and gill and at lower levels in hemocytes and hepatopancreas. Isoform 2 is mainly expressed in gill, hepatopancreas, muscle and eyestalk.

The protein localises to the secreted. May bind to bacterial LPS and thus specifically inhibit the LPS-mediated activation of the hemolymph coagulation. It has a strong antibacterial effect especially on the growth of Gram-negative bacteria. The chain is Anti-lipopolysaccharide factor from Portunus trituberculatus (Swimming crab).